The sequence spans 340 residues: 4-hydroxythreonine-4-phosphate dehydrogenase (340 aa).

Residues H141 and T142 each coordinate substrate. Positions 171, 216, and 271 each coordinate a divalent metal cation. Positions 279, 288, and 297 each coordinate substrate.

The protein belongs to the PdxA family. As to quaternary structure, homodimer. It depends on Zn(2+) as a cofactor. The cofactor is Mg(2+). Co(2+) is required as a cofactor.

Its subcellular location is the cytoplasm. It carries out the reaction 4-(phosphooxy)-L-threonine + NAD(+) = 3-amino-2-oxopropyl phosphate + CO2 + NADH. Its pathway is cofactor biosynthesis; pyridoxine 5'-phosphate biosynthesis; pyridoxine 5'-phosphate from D-erythrose 4-phosphate: step 4/5. In terms of biological role, catalyzes the NAD(P)-dependent oxidation of 4-(phosphooxy)-L-threonine (HTP) into 2-amino-3-oxo-4-(phosphooxy)butyric acid which spontaneously decarboxylates to form 3-amino-2-oxopropyl phosphate (AHAP). In Desulforapulum autotrophicum (strain ATCC 43914 / DSM 3382 / VKM B-1955 / HRM2) (Desulfobacterium autotrophicum), this protein is 4-hydroxythreonine-4-phosphate dehydrogenase.